The primary structure comprises 184 residues: Chaperone protein YcdY (184 aa).

This sequence belongs to the TorD/DmsD family. As to quaternary structure, interacts with YcdX.

In terms of biological role, acts as a chaperone that increases YcdX activity, maybe by facilitating the correct insertion of the zinc ions into the catalytic site of YcdX. Involved in the swarming motility process. The sequence is that of Chaperone protein YcdY (ycdY) from Escherichia coli (strain K12).